Consider the following 481-residue polypeptide: ATP synthase subunit beta (481 aa).

ATP is bound at residue 154–161 (GGAGVGKT).

It belongs to the ATPase alpha/beta chains family. F-type ATPases have 2 components, CF(1) - the catalytic core - and CF(0) - the membrane proton channel. CF(1) has five subunits: alpha(3), beta(3), gamma(1), delta(1), epsilon(1). CF(0) has three main subunits: a(1), b(2) and c(9-12). The alpha and beta chains form an alternating ring which encloses part of the gamma chain. CF(1) is attached to CF(0) by a central stalk formed by the gamma and epsilon chains, while a peripheral stalk is formed by the delta and b chains.

It localises to the cell inner membrane. The catalysed reaction is ATP + H2O + 4 H(+)(in) = ADP + phosphate + 5 H(+)(out). Functionally, produces ATP from ADP in the presence of a proton gradient across the membrane. The catalytic sites are hosted primarily by the beta subunits. The protein is ATP synthase subunit beta of Novosphingobium aromaticivorans (strain ATCC 700278 / DSM 12444 / CCUG 56034 / CIP 105152 / NBRC 16084 / F199).